Consider the following 196-residue polypeptide: Probable GTP-binding protein EngB (196 aa).

The EngB-type G domain maps to 22 to 195 (KLPEVALAGR…WNWIESITKV (174 aa)). GTP is bound by residues 30–37 (GRSNVGKS), 57–61 (GKTQT), 75–78 (DVPG), 142–145 (TKID), and 174–176 (FSA). Residues S37 and T59 each contribute to the Mg(2+) site.

It belongs to the TRAFAC class TrmE-Era-EngA-EngB-Septin-like GTPase superfamily. EngB GTPase family. It depends on Mg(2+) as a cofactor.

Its function is as follows. Necessary for normal cell division and for the maintenance of normal septation. This chain is Probable GTP-binding protein EngB, found in Ligilactobacillus salivarius (strain UCC118) (Lactobacillus salivarius).